The chain runs to 246 residues: tRNA (guanine-N(7)-)-methyltransferase (246 aa).

The segment at 1-26 (MSDSSSSSENAPATPESPGRPPRGIK) is disordered. Positions 74, 99, 126, and 149 each coordinate S-adenosyl-L-methionine. Aspartate 149 is a catalytic residue. Substrate contacts are provided by residues lysine 153, aspartate 185, and 224-227 (TKFE).

Belongs to the class I-like SAM-binding methyltransferase superfamily. TrmB family.

It carries out the reaction guanosine(46) in tRNA + S-adenosyl-L-methionine = N(7)-methylguanosine(46) in tRNA + S-adenosyl-L-homocysteine. Its pathway is tRNA modification; N(7)-methylguanine-tRNA biosynthesis. Its function is as follows. Catalyzes the formation of N(7)-methylguanine at position 46 (m7G46) in tRNA. The protein is tRNA (guanine-N(7)-)-methyltransferase of Chromohalobacter salexigens (strain ATCC BAA-138 / DSM 3043 / CIP 106854 / NCIMB 13768 / 1H11).